The sequence spans 195 residues: MKIGVLALQGAFREHLNMLGTLGAEAVEVRKAEGLPELSGLIIPGGESTTITKLLDIFGMAEPIKALAKKGMPIWGTCAGMICLAKELPGDISGVKPLGLMDITVRRNAFGRQVNSFEAMLKVKGLDEADFPAVFIRAPLVEKTGKGVEILSKLPDGTIVAVRENNLLAISFHPELSGDNRFHRYFVQMAKTYKA.

L-glutamine is bound at residue 46–48 (GES). Cysteine 78 (nucleophile) is an active-site residue. L-glutamine contacts are provided by residues arginine 107 and 136-137 (IR). Residues histidine 173 and glutamate 175 each act as charge relay system in the active site.

Belongs to the glutaminase PdxT/SNO family. In terms of assembly, in the presence of PdxS, forms a dodecamer of heterodimers. Only shows activity in the heterodimer.

It carries out the reaction aldehydo-D-ribose 5-phosphate + D-glyceraldehyde 3-phosphate + L-glutamine = pyridoxal 5'-phosphate + L-glutamate + phosphate + 3 H2O + H(+). The catalysed reaction is L-glutamine + H2O = L-glutamate + NH4(+). It functions in the pathway cofactor biosynthesis; pyridoxal 5'-phosphate biosynthesis. Functionally, catalyzes the hydrolysis of glutamine to glutamate and ammonia as part of the biosynthesis of pyridoxal 5'-phosphate. The resulting ammonia molecule is channeled to the active site of PdxS. The chain is Pyridoxal 5'-phosphate synthase subunit PdxT from Dehalococcoides mccartyi (strain CBDB1).